Reading from the N-terminus, the 101-residue chain is Large ribosomal subunit protein bL20 (101 aa).

It belongs to the bacterial ribosomal protein bL20 family.

Binds directly to 23S ribosomal RNA and is necessary for the in vitro assembly process of the 50S ribosomal subunit. It is not involved in the protein synthesizing functions of that subunit. This chain is Large ribosomal subunit protein bL20 (rplT), found in Carsonella ruddii (strain PV).